A 160-amino-acid polypeptide reads, in one-letter code: 2-C-methyl-D-erythritol 2,4-cyclodiphosphate synthase (160 aa).

Residues aspartate 10 and histidine 12 each coordinate a divalent metal cation. Residues 10 to 12 (DVH) and 36 to 37 (HS) each bind 4-CDP-2-C-methyl-D-erythritol 2-phosphate. A divalent metal cation is bound at residue histidine 44. Residues 58-60 (DIG), 134-137 (TTTE), phenylalanine 141, and arginine 144 contribute to the 4-CDP-2-C-methyl-D-erythritol 2-phosphate site.

Belongs to the IspF family. In terms of assembly, homotrimer. A divalent metal cation serves as cofactor.

The catalysed reaction is 4-CDP-2-C-methyl-D-erythritol 2-phosphate = 2-C-methyl-D-erythritol 2,4-cyclic diphosphate + CMP. The protein operates within isoprenoid biosynthesis; isopentenyl diphosphate biosynthesis via DXP pathway; isopentenyl diphosphate from 1-deoxy-D-xylulose 5-phosphate: step 4/6. Involved in the biosynthesis of isopentenyl diphosphate (IPP) and dimethylallyl diphosphate (DMAPP), two major building blocks of isoprenoid compounds. Catalyzes the conversion of 4-diphosphocytidyl-2-C-methyl-D-erythritol 2-phosphate (CDP-ME2P) to 2-C-methyl-D-erythritol 2,4-cyclodiphosphate (ME-CPP) with a corresponding release of cytidine 5-monophosphate (CMP). This Phocaeicola vulgatus (strain ATCC 8482 / DSM 1447 / JCM 5826 / CCUG 4940 / NBRC 14291 / NCTC 11154) (Bacteroides vulgatus) protein is 2-C-methyl-D-erythritol 2,4-cyclodiphosphate synthase.